The following is a 603-amino-acid chain: NADH-ubiquinone oxidoreductase chain 5 (603 aa).

The next 16 membrane-spanning stretches (helical) occupy residues 4–24, 36–56, 87–107, 114–134, 137–157, 171–191, 200–220, 241–261, 272–292, 301–320, 325–347, 366–386, 407–429, 457–477, 482–502, and 583–603; these read YTTM…ATLI, VKMT…MFMC, MMFI…SLWY, INQF…LVTA, LFQL…LIGW, AILY…WFLL, QMIL…LLAA, TPVS…FLLI, LIQT…AICA, IVAF…IGIN, AFLH…GSII, LPLT…MPFL, WALS…MILL, LTIG…PTSP, IPLY…LTAF, and MIKL…LLIM.

The protein belongs to the complex I subunit 5 family. In terms of assembly, core subunit of respiratory chain NADH dehydrogenase (Complex I) which is composed of 45 different subunits.

The protein resides in the mitochondrion inner membrane. The enzyme catalyses a ubiquinone + NADH + 5 H(+)(in) = a ubiquinol + NAD(+) + 4 H(+)(out). Its function is as follows. Core subunit of the mitochondrial membrane respiratory chain NADH dehydrogenase (Complex I) which catalyzes electron transfer from NADH through the respiratory chain, using ubiquinone as an electron acceptor. Essential for the catalytic activity and assembly of complex I. The sequence is that of NADH-ubiquinone oxidoreductase chain 5 (MT-ND5) from Hylobates lar (Lar gibbon).